Here is a 170-residue protein sequence, read N- to C-terminus: Tubulin polymerization-promoting protein family member 2 (170 aa).

Residues 127–147 (TGTHKERFDESGKGKGIAGRE) are disordered. The span at 129 to 139 (THKERFDESGK) shows a compositional bias: basic and acidic residues.

It belongs to the TPPP family.

The protein resides in the cytoplasm. The protein localises to the cytosol. It is found in the cell projection. Its subcellular location is the cilium. It localises to the flagellum. Probable regulator of microtubule dynamics required for sperm motility. In contrast to other members of the family, has no microtubule bundling activity. In Macaca fascicularis (Crab-eating macaque), this protein is Tubulin polymerization-promoting protein family member 2 (TPPP2).